Reading from the N-terminus, the 209-residue chain is Uracil phosphoribosyltransferase (209 aa).

5-phospho-alpha-D-ribose 1-diphosphate contacts are provided by residues arginine 79, arginine 104, and 131–139 (DPMLATGVS). Residues isoleucine 194 and 199–201 (GDA) contribute to the uracil site. 5-phospho-alpha-D-ribose 1-diphosphate is bound at residue aspartate 200.

The protein belongs to the UPRTase family. Mg(2+) is required as a cofactor.

The catalysed reaction is UMP + diphosphate = 5-phospho-alpha-D-ribose 1-diphosphate + uracil. It functions in the pathway pyrimidine metabolism; UMP biosynthesis via salvage pathway; UMP from uracil: step 1/1. Allosterically activated by GTP. Catalyzes the conversion of uracil and 5-phospho-alpha-D-ribose 1-diphosphate (PRPP) to UMP and diphosphate. This is Uracil phosphoribosyltransferase from Thermotoga neapolitana (strain ATCC 49049 / DSM 4359 / NBRC 107923 / NS-E).